We begin with the raw amino-acid sequence, 318 residues long: Olfactory receptor 13C5 (318 aa).

Residues 1–25 (MEWENHTILVEFFLKGLSGHPRLEL) are Extracellular-facing. N-linked (GlcNAc...) asparagine glycosylation occurs at Asn-5. A helical transmembrane segment spans residues 26–46 (LFFVLIFIMYVVILLGNGTLI). At 47-54 (LISILDPH) the chain is on the cytoplasmic side. Residues 55–75 (LHTPMYFFLGNLSFLDICYTT) traverse the membrane as a helical segment. The Extracellular portion of the chain corresponds to 76–99 (TSIPSTLVSFLSERKTISLSGCAV). A disulfide bond links Cys-97 and Cys-189. The helical transmembrane segment at 100 to 120 (QMFLSLAMGTTECVLLGVMAF) threads the bilayer. The Cytoplasmic portion of the chain corresponds to 121–139 (DRYVAICNPLRYPIIMSKD). A helical membrane pass occupies residues 140–160 (AYVPMAAGSWIIGAVNSAVQT). Over 161-197 (VFVVQLPFCRNNIINHFTCEILAVMKLACADISGNEF) the chain is Extracellular. Residues 198-217 (ILLVTTTLFLLTPLLLIIVS) traverse the membrane as a helical segment. At 218–237 (YTLIILSIFKISSSEGRSKP) the chain is on the cytoplasmic side. The chain crosses the membrane as a helical span at residues 238–258 (SSTCSARLTVVITFCGTIFLM). Residues 259–277 (YMKPKSQETLNSDDLDATD) are Extracellular-facing. Residues 278–298 (KLIFIFYRVMTPMMNPLIYSL) form a helical membrane-spanning segment. The Cytoplasmic segment spans residues 299 to 318 (RNKDVKEAVKHLLRRKNFNK).

Belongs to the G-protein coupled receptor 1 family.

It is found in the cell membrane. Its function is as follows. Odorant receptor. The chain is Olfactory receptor 13C5 (OR13C5) from Homo sapiens (Human).